Here is a 299-residue protein sequence, read N- to C-terminus: Putative beta-glucosidase 2 (299 aa).

Residues 1–16 (MLHCITTIFLSISRMT) form the signal peptide. An a beta-D-glucoside-binding site is contributed by 49–50 (NE). Residue E50 is the Proton donor of the active site. A disulfide bond links C69 and C72. N71 and N76 each carry an N-linked (GlcNAc...) asparagine glycan. Y189 is an a beta-D-glucoside binding site. A glycan (N-linked (GlcNAc...) asparagine) is linked at N222. A beta-D-glucoside is bound at residue E255. Catalysis depends on E255, which acts as the Nucleophile. N-linked (GlcNAc...) asparagine glycosylation is present at N290.

Belongs to the glycosyl hydrolase 1 family.

The catalysed reaction is Hydrolysis of terminal, non-reducing beta-D-glucosyl residues with release of beta-D-glucose.. In Arabidopsis thaliana (Mouse-ear cress), this protein is Putative beta-glucosidase 2.